A 119-amino-acid chain; its full sequence is MVKLAFPRELRLLTPSQFTFVFQQPQRAGTPQITILGRLNSLGHPRIGLTVAKKNVRRAHERNRIKRLTRESFRLRQHELPAMDFVVVAKKGVANLDNRALSEALEKLWRRHCRLARGS.

It belongs to the RnpA family. Consists of a catalytic RNA component (M1 or rnpB) and a protein subunit.

The enzyme catalyses Endonucleolytic cleavage of RNA, removing 5'-extranucleotides from tRNA precursor.. In terms of biological role, RNaseP catalyzes the removal of the 5'-leader sequence from pre-tRNA to produce the mature 5'-terminus. It can also cleave other RNA substrates such as 4.5S RNA. The protein component plays an auxiliary but essential role in vivo by binding to the 5'-leader sequence and broadening the substrate specificity of the ribozyme. The polypeptide is Ribonuclease P protein component (Escherichia coli O157:H7).